The sequence spans 267 residues: 3-deoxy-manno-octulosonate cytidylyltransferase (267 aa).

This sequence belongs to the KdsB family.

The protein resides in the cytoplasm. The catalysed reaction is 3-deoxy-alpha-D-manno-oct-2-ulosonate + CTP = CMP-3-deoxy-beta-D-manno-octulosonate + diphosphate. It participates in nucleotide-sugar biosynthesis; CMP-3-deoxy-D-manno-octulosonate biosynthesis; CMP-3-deoxy-D-manno-octulosonate from 3-deoxy-D-manno-octulosonate and CTP: step 1/1. The protein operates within bacterial outer membrane biogenesis; lipopolysaccharide biosynthesis. Its function is as follows. Activates KDO (a required 8-carbon sugar) for incorporation into bacterial lipopolysaccharide in Gram-negative bacteria. The protein is 3-deoxy-manno-octulosonate cytidylyltransferase of Paraburkholderia phymatum (strain DSM 17167 / CIP 108236 / LMG 21445 / STM815) (Burkholderia phymatum).